A 1363-amino-acid chain; its full sequence is Spike glycoprotein (1363 aa).

The signal sequence occupies residues 1 to 13 (MFLILLISLPMAL). At 14 to 1307 (AVIGDLKCTT…GTYEYYVKWP (1294 aa)) the chain is on the extracellular side. The region spanning 15 to 298 (VIGDLKCTTV…DFMSEIKCKT (284 aa)) is the BetaCoV S1-NTD domain. 5 disulfides stabilise this stretch: cysteine 21-cysteine 165, cysteine 160-cysteine 193, cysteine 172-cysteine 252, cysteine 286-cysteine 296, and cysteine 331-cysteine 356. N-linked (GlcNAc...) asparagine; by host glycans are attached at residues asparagine 59 and asparagine 133. An N-linked (GlcNAc...) asparagine; by host glycan is attached at asparagine 198. Residues 329 to 617 (PDCNIEAWLN…DVNSGTTCST (289 aa)) enclose the BetaCoV S1-CTD domain. Asparagine 359 is a glycosylation site (N-linked (GlcNAc...) asparagine; by host). Intrachain disulfides connect cysteine 374–cysteine 427 and cysteine 386–cysteine 615. N-linked (GlcNAc...) asparagine; by host glycans are attached at residues asparagine 437, asparagine 649, asparagine 676, asparagine 696, asparagine 714, asparagine 739, and asparagine 788. Fusion peptide regions lie at residues 914–935 (SAIE…VEAY) and 933–953 (EAYN…VQSY). Asparagine 937 is a glycosylation site (N-linked (GlcNAc...) asparagine; by host). The cysteines at positions 938 and 949 are disulfide-linked. Positions 1014–1064 (QKLIANAFNNALDAIQEGFDATNSALVKIQAVVNANAEALNNLLQQLSNRF) are heptad repeat 1. A coiled-coil region spans residues 1043–1087 (QAVVNANAEALNNLLQQLSNRFGAISSSLQEILSRLDALEAQAQI). 6 N-linked (GlcNAc...) asparagine; by host glycosylation sites follow: asparagine 1194, asparagine 1224, asparagine 1234, asparagine 1253, asparagine 1267, and asparagine 1288. A heptad repeat 2 region spans residues 1258-1296 (APDLSLDYINVTFLDLQDEMNRLQEAIKVLNQSYINLKD). Residues 1269–1297 (TFLDLQDEMNRLQEAIKVLNQSYINLKDI) are a coiled coil. Residues 1308–1328 (WYVWLLIGLAGVAMLVLLFFI) form a helical membrane-spanning segment. The Cytoplasmic segment spans residues 1329-1363 (CCCTGCGTSCFKKCGGCCDDYTGHQELVIKTSHDD). The KxHxx signature appears at 1359–1363 (TSHDD).

The protein belongs to the betacoronaviruses spike protein family. Homotrimer; each monomer consists of a S1 and a S2 subunit. The resulting peplomers protrude from the virus surface as spikes. Post-translationally, specific enzymatic cleavages in vivo yield mature proteins. The precursor is processed into S1 and S2 by host cell furin or another cellular protease to yield the mature S1 and S2 proteins. Additionally, a second cleavage leads to the release of a fusion peptide after viral attachment to host cell receptor. In terms of processing, the cytoplasmic Cys-rich domain is palmitoylated. Spike glycoprotein is digested within host endosomes.

The protein localises to the virion membrane. It localises to the host endoplasmic reticulum-Golgi intermediate compartment membrane. Its subcellular location is the host cell membrane. In terms of biological role, attaches the virion to the cell membrane by interacting with host receptor, initiating the infection. Functionally, mediates fusion of the virion and cellular membranes by acting as a class I viral fusion protein. Under the current model, the protein has at least three conformational states: pre-fusion native state, pre-hairpin intermediate state, and post-fusion hairpin state. During viral and target cell membrane fusion, the coiled coil regions (heptad repeats) assume a trimer-of-hairpins structure, positioning the fusion peptide in close proximity to the C-terminal region of the ectodomain. The formation of this structure appears to drive apposition and subsequent fusion of viral and target cell membranes. Its function is as follows. Acts as a viral fusion peptide which is unmasked following S2 cleavage occurring upon virus endocytosis. The protein is Spike glycoprotein of Bos taurus (Bovine).